Reading from the N-terminus, the 83-residue chain is Small ribosomal subunit protein bS16 (83 aa).

The protein belongs to the bacterial ribosomal protein bS16 family.

The protein is Small ribosomal subunit protein bS16 of Acinetobacter baumannii (strain AB307-0294).